The primary structure comprises 528 residues: Nucleoporin ASM4 (528 aa).

The FG 1 repeat unit spans residues 2 to 3; sequence FG. Over residues 23-50 the composition is skewed to low complexity; it reads TTQMFQSQSQLQPQPQPQPQQQQQHLQF. Disordered regions lie at residues 23–64 and 88–144; these read TTQM…FGNS and IKNG…SMNA. Polar residues-rich tracts occupy residues 51–64 and 97–108; these read NGSS…FGNS and QHGQGNNPSWVN. The stretch at 61–62 is one FG 2 repeat; the sequence is FG. Residues 110 to 125 are compositionally biased toward basic residues; the sequence is PKKRFTPHTVIRRKTT. Positions 127-141 are enriched in low complexity; sequence QNSSSDINQNDDSSS. 3 FG repeats span residues 195 to 196, 274 to 275, and 291 to 292; these read FG. The RRM Nup35-type domain maps to 265–394; sequence SSSLSAIIVF…IPYSKNAVEQ (130 aa). Phosphoserine is present on residues Ser-458 and Ser-464. Residues 490-510 adopt a coiled-coil conformation; it reads NLLRNLESKMRQQEAKYRNNE. Residues 523 to 524 form an FG 6 repeat; the sequence is FG.

In terms of assembly, component of the nuclear pore complex (NPC). NPC constitutes the exclusive means of nucleocytoplasmic transport. NPCs allow the passive diffusion of ions and small molecules and the active, nuclear transport receptor-mediated bidirectional transport of macromolecules such as proteins, RNAs, ribonucleoparticles (RNPs), and ribosomal subunits across the nuclear envelope. Due to its 8-fold rotational symmetry, all subunits are present with 8 copies or multiples thereof. ASM4 may form a subcomplex with NUP53, NDC1, and NUP170. Phosphorylated by CDC28.

The protein localises to the nucleus. The protein resides in the nuclear pore complex. It is found in the nucleus membrane. In terms of biological role, functions as a component of the nuclear pore complex (NPC). NPC components, collectively referred to as nucleoporins (NUPs), can play the role of both NPC structural components and of docking or interaction partners for transiently associated nuclear transport factors. Active directional transport is assured by both, a Phe-Gly (FG) repeat affinity gradient for these transport factors across the NPC and a transport cofactor concentration gradient across the nuclear envelope (GSP1 and GSP2 GTPases associated predominantly with GTP in the nucleus, with GDP in the cytoplasm). May have a mitosis control function. The polypeptide is Nucleoporin ASM4 (ASM4) (Saccharomyces cerevisiae (strain ATCC 204508 / S288c) (Baker's yeast)).